Consider the following 304-residue polypeptide: N-acetyl-D-glucosamine kinase (304 aa).

Residues 4–11 (GLDIGGTK) and 133–140 (GFGGGFVL) contribute to the ATP site. 4 residues coordinate Zn(2+): His-157, Cys-178, Cys-180, and Cys-185.

This sequence belongs to the ROK (NagC/XylR) family. NagK subfamily.

It carries out the reaction N-acetyl-D-glucosamine + ATP = N-acetyl-D-glucosamine 6-phosphate + ADP + H(+). The protein operates within cell wall biogenesis; peptidoglycan recycling. Catalyzes the phosphorylation of N-acetyl-D-glucosamine (GlcNAc) derived from cell-wall degradation, yielding GlcNAc-6-P. The sequence is that of N-acetyl-D-glucosamine kinase from Haemophilus influenzae (strain 86-028NP).